The chain runs to 212 residues: MKNPMIKNGFLLALFALICTGLVAAVNQQTVDKIKQQEQQELMRVLHQLIPDEMHDNELTAQCTLLLDKDALGTDSPMPAYIATSAGKPVAIAIEAIAPDGYNGNIKLIVGISTKGEVLGVRTLAHQETPGLGDKIDLRKSNWVSQFVGKVLGSADDKQWLVKKDGGDFDQFTGATITPRAYVKAVKNAVWYFNNNQAQIFSLPLNCEANHD.

The helical transmembrane segment at 9–29 threads the bilayer; sequence GFLLALFALICTGLVAAVNQQ. Threonine 176 carries the FMN phosphoryl threonine modification.

The protein belongs to the RnfG family. As to quaternary structure, the complex is composed of six subunits: RnfA, RnfB, RnfC, RnfD, RnfE and RnfG. FMN serves as cofactor.

It localises to the cell inner membrane. Part of a membrane-bound complex that couples electron transfer with translocation of ions across the membrane. This chain is Ion-translocating oxidoreductase complex subunit G, found in Shewanella baltica (strain OS223).